The chain runs to 29 residues: Potassium channel toxin alpha-KTx 8.3 (29 aa).

Intrachain disulfides connect Cys3–Cys19, Cys6–Cys24, and Cys10–Cys26.

Belongs to the short scorpion toxin superfamily. Potassium channel inhibitor family. Alpha-KTx 08 subfamily. In terms of tissue distribution, expressed by the venom gland.

Its subcellular location is the secreted. Functionally, specific and potent inhibitor of ClC-2/CLCN2 chloride channel. It slows ClC-2/CLCN2 activation by increasing the latency to first opening by nearly 8-fold but is unable to inhibit open channels, suggesting that this toxin inhibits channel activation gating. This Leiurus hebraeus (Hebrew deathstalker scorpion) protein is Potassium channel toxin alpha-KTx 8.3.